The chain runs to 302 residues: Oxygen-dependent coproporphyrinogen-III oxidase (302 aa).

Ser94 contributes to the substrate binding site. Residues His98 and His108 each coordinate a divalent metal cation. The Proton donor role is filled by His108. 110 to 112 provides a ligand contact to substrate; sequence NVR. A divalent metal cation is bound by residues His147 and His177. Residues 242–277 are important for dimerization; sequence YVEFNLVFDRGTLFGLQSGGRTESILMSMPPVANWR. A substrate-binding site is contributed by 260 to 262; the sequence is GGR.

This sequence belongs to the aerobic coproporphyrinogen-III oxidase family. Homodimer. The cofactor is a divalent metal cation.

Its subcellular location is the cytoplasm. It carries out the reaction coproporphyrinogen III + O2 + 2 H(+) = protoporphyrinogen IX + 2 CO2 + 2 H2O. Its pathway is porphyrin-containing compound metabolism; protoporphyrin-IX biosynthesis; protoporphyrinogen-IX from coproporphyrinogen-III (O2 route): step 1/1. In terms of biological role, involved in the heme biosynthesis. Catalyzes the aerobic oxidative decarboxylation of propionate groups of rings A and B of coproporphyrinogen-III to yield the vinyl groups in protoporphyrinogen-IX. The chain is Oxygen-dependent coproporphyrinogen-III oxidase from Ralstonia nicotianae (strain ATCC BAA-1114 / GMI1000) (Ralstonia solanacearum).